A 176-amino-acid chain; its full sequence is MSRVGKSPIALQGAEVKLADGAITVKGPLGTITQAINPLVNVANNDGTLNLSPVDESREANALSGTMRAIIANAVHGVTKGFERKLTLVGVGYRAQAQGDKLNLSLGFSHPVVHQMPEGVKAETPTQTEIVIKGINKQQVGQVAAEVRGYRPPEPYKGKGVRYADEVVILKETKKK.

It belongs to the universal ribosomal protein uL6 family. In terms of assembly, part of the 50S ribosomal subunit.

In terms of biological role, this protein binds to the 23S rRNA, and is important in its secondary structure. It is located near the subunit interface in the base of the L7/L12 stalk, and near the tRNA binding site of the peptidyltransferase center. The protein is Large ribosomal subunit protein uL6 of Burkholderia cenocepacia (strain HI2424).